A 561-amino-acid chain; its full sequence is Arginine--tRNA ligase (561 aa).

The short motif at 129–139 is the 'HIGH' region element; it reads ANPTGPLHVGH.

The protein belongs to the class-I aminoacyl-tRNA synthetase family. As to quaternary structure, monomer.

The protein localises to the cytoplasm. It catalyses the reaction tRNA(Arg) + L-arginine + ATP = L-arginyl-tRNA(Arg) + AMP + diphosphate. In Bordetella parapertussis (strain 12822 / ATCC BAA-587 / NCTC 13253), this protein is Arginine--tRNA ligase.